Consider the following 562-residue polypeptide: Protein wntless (562 aa).

Over 1-15 the chain is Cytoplasmic; sequence MSGTILENLSGRKLS. A helical membrane pass occupies residues 16–36; the sequence is ILVSSLMLCQVVCFLMGGLFA. The Lumenal segment spans residues 37–239; that stretch reads PVPAGHQTVL…AIHQNGGFTQ (203 aa). 2 N-linked (GlcNAc...) asparagine glycosylation sites follow: N58 and N103. Residues 240-260 form a helical membrane-spanning segment; sequence VWLVLKTLLFPFVIGIMMWFW. Residues 261–275 are Cytoplasmic-facing; the sequence is RRVHILQRSPALLEY. A helical transmembrane segment spans residues 276–296; the sequence is MLFYLGGALSFLNLPLELLTL. At 297 to 311 the chain is on the lumenal side; the sequence is GVEMPYMLLLSDVRQ. Residues 312-332 traverse the membrane as a helical segment; it reads GIFYAMLLSFWLVFAGEHMLI. At 333–344 the chain is on the cytoplasmic side; it reads QDSPSKSTIRSR. A helical transmembrane segment spans residues 345–365; it reads YWKHLSAVVVGCISLFVFDIC. At 366–390 the chain is on the lumenal side; that stretch reads ERGVQMRNPFYSIWTTPLGAKVAMS. A helical membrane pass occupies residues 391–411; the sequence is FIVLAGVSAAIYFLFLCFMVW. The Cytoplasmic portion of the chain corresponds to 412–441; it reads KVFKDIGDKRTSLPSMSQARRLHYEGLIYR. A helical transmembrane segment spans residues 442–462; it reads FKFLMLATLLCAGLTVAGFIM. The Lumenal segment spans residues 463–482; it reads GQMAEGHWKWNENIEIQLTS. Residues 483–503 traverse the membrane as a helical segment; that stretch reads AFLTGVYGMWNIYIFALIILY. At 504–562 the chain is on the cytoplasmic side; that stretch reads APSHKQWPTMRHSDETTQSNENIVASAASEEIEFSNLPSDSNPSEISSLTSFTRKVAFD.

The protein belongs to the wntless family. As to quaternary structure, interacts with wg; in the Golgi. Interacts with Vps35, a component of the retromer complex; wls stability is regulated by Vps35.

Its subcellular location is the presynaptic cell membrane. It localises to the postsynaptic cell membrane. It is found in the cell membrane. The protein localises to the endoplasmic reticulum membrane. The protein resides in the endosome membrane. Its subcellular location is the golgi apparatus membrane. Its function is as follows. A segment polarity gene required for wingless (wg)-dependent patterning processes, acting in both wg-sending cells and wg-target cells. In non-neuronal cells wls directs wg secretion. The wls traffic loop encompasses the Golgi, the cell surface, an endocytic compartment and a retrograde route leading back to the Golgi, and involves clathrin-mediated endocytosis and the retromer complex (a conserved protein complex consisting of Vps35 and Vps26). In neuronal cells (the larval motorneuron NMJ), the wg signal moves across the synapse via the release of wls-containing exosome-like vesicles. Postsynaptic wls is required for the trafficking of fz2 through the fz2-interacting protein Grip. The protein is Protein wntless of Drosophila grimshawi (Hawaiian fruit fly).